The sequence spans 965 residues: Collagen alpha-1(I) chain (965 aa).

Pro residues predominate over residues 1–21; sequence SVPGPMGPSGPRGLPGPPGPG. Residues 1–965 are disordered; that stretch reads SVPGPMGPSG…PGPPGPPGPP (965 aa). 11 positions are modified to 4-hydroxyproline: Pro-15, Pro-18, Pro-20, Pro-29, Pro-32, Pro-35, Pro-49, Pro-64, Pro-70, Pro-79, and Pro-85. Residues 52–66 are compositionally biased toward basic and acidic residues; the sequence is NGDDGEAGKPGRPGE. Lys-88 carries the post-translational modification 5-hydroxylysine; alternate. The O-linked (Gal...) hydroxylysine; alternate glycan is linked to Lys-88. Ser-94 is modified (phosphoserine). The span at 102–118 shows a compositional bias: low complexity; the sequence is DAGPAGPKGEPGSPGEN. Residues Pro-112, Pro-115, Pro-121, Pro-130, Pro-136, Pro-157, Pro-166, Pro-169, Pro-196, Pro-199, Pro-211, Pro-217, Pro-226, Pro-232, Pro-235, and Pro-250 each carry the 4-hydroxyproline modification. Over residues 136–154 the composition is skewed to low complexity; it reads PGASGPAGARGNDGATGAA. The span at 156-168 shows a compositional bias: pro residues; sequence PPGPTGPAGPPGF. A compositionally biased stretch (low complexity) spans 202–241; sequence AGAAGPAGNPGADGQPGAKGANGAPGIAGAPGFPGARGPS. Lys-253 carries the 5-hydroxylysine modification. 4-hydroxyproline occurs at positions 259, 262, 273, 282, 297, 303, 312, and 318. Positions 307 to 327 are enriched in gly residues; that stretch reads GERGGPGSRGFPGADGAGPKG. Lys-326 carries the 5-hydroxylysine modification. Residues Pro-335, Pro-344, Pro-350, Pro-356, Pro-365, Pro-368, Pro-377, Pro-386, Pro-392, Pro-404, Pro-413, Pro-422, Pro-425, Pro-443, Pro-460, Pro-466, Pro-472, Pro-480, Pro-492, Pro-501, Pro-509, Pro-515, and Pro-524 each carry the 4-hydroxyproline modification. Over residues 359–385 the composition is skewed to low complexity; it reads KGLTGSPGSPGPDGKTGPPGPAGQDGR. Residues 394-413 show a composition bias toward low complexity; it reads ARGQAGVMGFPGPKGAAGEP. Positions 472 to 482 are enriched in low complexity; the sequence is PGEADLGAPGP. Position 536 is a 5-hydroxylysine (Lys-536). 4-hydroxyproline is present on residues Pro-542, Pro-557, and Pro-563. Over residues 569–583 the composition is skewed to low complexity; the sequence is SGPSGPAGPTGARGA. Ser-572 carries the phosphoserine modification. 8 positions are modified to 4-hydroxyproline: Pro-584, Pro-590, Pro-593, Pro-602, Pro-608, Pro-626, Pro-635, and Pro-644. Positions 596-623 are enriched in low complexity; that stretch reads AGFAGPPGADGQPGAKGEPGDAGAKGDA. The span at 625–637 shows a compositional bias: pro residues; that stretch reads PPGPAGPTGPPGP. Lys-647 is subject to 5-hydroxylysine. The segment covering 652–668 has biased composition (low complexity); it reads SAGPPGATGFPGAAGRV. A 4-hydroxyproline mark is found at Pro-656 and Pro-662. Pro-670 carries the post-translational modification 3-hydroxyproline. A 4-hydroxyproline mark is found at Pro-671, Pro-680, Pro-683, Pro-704, Pro-713, Pro-721, Pro-730, Pro-748, Pro-757, Pro-760, Pro-766, Pro-771, Pro-777, Pro-783, Pro-791, and Pro-797. Low complexity predominate over residues 697–706; sequence ETGPAGRPGE. Residues 718-730 are compositionally biased toward low complexity; the sequence is KGSPGADGPAGAP. The span at 768-780 shows a compositional bias: pro residues; it reads KGPPGPMGPPGLA. Lys-806 carries the post-translational modification 5-hydroxylysine. Residues 815 to 830 show a composition bias toward pro residues; that stretch reads SGPPGAPGAPGAPGPV. 4-hydroxyproline is present on residues Pro-818, Pro-821, and Pro-824. The segment covering 851–865 has biased composition (low complexity); sequence AGPAGARGPAGPQGP. A compositionally biased stretch (basic and acidic residues) spans 866 to 880; the sequence is RGDKGETGEQGDRGI. Lys-869 bears the 5-hydroxylysine mark. Lys-881 carries the post-translational modification 5-hydroxylysine; alternate. A glycan (O-linked (Gal...) hydroxylysine; alternate) is linked at Lys-881. 4-hydroxyproline is present on residues Pro-896, Pro-899, Pro-917, and Pro-932. Low complexity predominate over residues 899-932; sequence PGEQGPSGASGPAGPRGPPGSAGSPGKDGLNGLP. Pro-937 is subject to 3-hydroxyproline. At Pro-938 the chain carries 4-hydroxyproline. Residues 950 to 965 show a composition bias toward pro residues; that stretch reads VGPPGPPGPPGPPGPP. At Pro-952 the chain carries 3-hydroxyproline. At Pro-953 the chain carries 4-hydroxyproline. 3-hydroxyproline is present on Pro-955. Position 956 is a 4-hydroxyproline (Pro-956). Pro-958 carries the post-translational modification 3-hydroxyproline. Residues Pro-959, Pro-962, and Pro-965 each carry the 4-hydroxyproline modification.

Belongs to the fibrillar collagen family. Trimers of one alpha 2(I) and two alpha 1(I) chains. In terms of processing, contains mostly 4-hydroxyproline. Proline residues at the third position of the tripeptide repeating unit (G-X-Y) are hydroxylated in some or all of the chains. Contains 3-hydroxyproline at a few sites. This modification occurs on the first proline residue in the sequence motif Gly-Pro-Hyp, where Hyp is 4-hydroxyproline. Post-translationally, lysine residues at the third position of the tripeptide repeating unit (G-X-Y) are 5-hydroxylated in some or all of the chains. In terms of processing, O-glycosylated on hydroxylated lysine residues. The O-linked glycan consists of a Glc-Gal disaccharide. As to expression, expressed in bones.

Its subcellular location is the secreted. The protein localises to the extracellular space. It localises to the extracellular matrix. Functionally, type I collagen is a member of group I collagen (fibrillar forming collagen). The chain is Collagen alpha-1(I) chain from Scelidotherium sp. (strain SLP-2019) (South American ground sloth).